Here is a 334-residue protein sequence, read N- to C-terminus: Glycerol-1-phosphate dehydrogenase [NAD(P)+] (334 aa).

NAD(+) contacts are provided by residues 77–81 (GRPID) and 99–102 (TTAS). Substrate is bound at residue Asp-104. Ser-108 provides a ligand contact to NAD(+). Residue Asp-147 participates in substrate binding. Residues Asp-147 and His-225 each coordinate Zn(2+). His-229 contributes to the substrate binding site. His-246 lines the Zn(2+) pocket.

It belongs to the glycerol-1-phosphate dehydrogenase family. Zn(2+) is required as a cofactor.

It is found in the cytoplasm. It carries out the reaction sn-glycerol 1-phosphate + NAD(+) = dihydroxyacetone phosphate + NADH + H(+). It catalyses the reaction sn-glycerol 1-phosphate + NADP(+) = dihydroxyacetone phosphate + NADPH + H(+). The protein operates within membrane lipid metabolism; glycerophospholipid metabolism. Catalyzes the NAD(P)H-dependent reduction of dihydroxyacetonephosphate (DHAP or glycerone phosphate) to glycerol 1-phosphate (G1P). The G1P thus generated is used as the glycerophosphate backbone of phospholipids in the cellular membranes of Archaea. This is Glycerol-1-phosphate dehydrogenase [NAD(P)+] from Methanococcus maripaludis (strain C7 / ATCC BAA-1331).